The sequence spans 467 residues: 3-isopropylmalate dehydratase large subunit (467 aa).

Residues C348, C409, and C412 each contribute to the [4Fe-4S] cluster site. Residues 423 to 448 are disordered; the sequence is NERSISTSNRNFEGRQGKGSRTHLAS.

It belongs to the aconitase/IPM isomerase family. LeuC type 1 subfamily. In terms of assembly, heterodimer of LeuC and LeuD. The cofactor is [4Fe-4S] cluster.

It catalyses the reaction (2R,3S)-3-isopropylmalate = (2S)-2-isopropylmalate. The protein operates within amino-acid biosynthesis; L-leucine biosynthesis; L-leucine from 3-methyl-2-oxobutanoate: step 2/4. Functionally, catalyzes the isomerization between 2-isopropylmalate and 3-isopropylmalate, via the formation of 2-isopropylmaleate. This Bifidobacterium longum (strain DJO10A) protein is 3-isopropylmalate dehydratase large subunit.